Consider the following 499-residue polypeptide: Chaperone SurA (499 aa).

The first 36 residues, 1 to 36 (MKRQEFALFSLTLMLSPWRRVLLPAVLAAMAGPALA), serve as a signal peptide directing secretion. PpiC domains lie at 231–333 (PTEF…KLTA) and 352–450 (ITQT…QVEN).

The protein resides in the periplasm. It catalyses the reaction [protein]-peptidylproline (omega=180) = [protein]-peptidylproline (omega=0). In terms of biological role, chaperone involved in the correct folding and assembly of outer membrane proteins. Recognizes specific patterns of aromatic residues and the orientation of their side chains, which are found more frequently in integral outer membrane proteins. May act in both early periplasmic and late outer membrane-associated steps of protein maturation. This is Chaperone SurA from Cupriavidus pinatubonensis (strain JMP 134 / LMG 1197) (Cupriavidus necator (strain JMP 134)).